We begin with the raw amino-acid sequence, 415 residues long: Gamma-glutamyl phosphate reductase (415 aa).

Belongs to the gamma-glutamyl phosphate reductase family.

The protein resides in the cytoplasm. It carries out the reaction L-glutamate 5-semialdehyde + phosphate + NADP(+) = L-glutamyl 5-phosphate + NADPH + H(+). It participates in amino-acid biosynthesis; L-proline biosynthesis; L-glutamate 5-semialdehyde from L-glutamate: step 2/2. Its function is as follows. Catalyzes the NADPH-dependent reduction of L-glutamate 5-phosphate into L-glutamate 5-semialdehyde and phosphate. The product spontaneously undergoes cyclization to form 1-pyrroline-5-carboxylate. The protein is Gamma-glutamyl phosphate reductase of Bacillus cereus (strain ZK / E33L).